Here is an 885-residue protein sequence, read N- to C-terminus: DNA mismatch repair protein MutS (885 aa).

640–647 (GPNMGGKS) lines the ATP pocket.

Belongs to the DNA mismatch repair MutS family.

In terms of biological role, this protein is involved in the repair of mismatches in DNA. It is possible that it carries out the mismatch recognition step. This protein has a weak ATPase activity. In Variovorax paradoxus (strain S110), this protein is DNA mismatch repair protein MutS.